Reading from the N-terminus, the 147-residue chain is Hemoglobin subunit gamma (147 aa).

The Globin domain maps to 3 to 147; that stretch reads HFTAEEKAII…VAIALGHKYH (145 aa). His64 and His93 together coordinate heme b.

It belongs to the globin family. As to quaternary structure, heterotetramer of two alpha chains and two gamma chains in fetal hemoglobin (Hb F). Red blood cells.

Gamma chains make up the fetal hemoglobin F, in combination with alpha chains. This Cephalopachus bancanus (Western tarsier) protein is Hemoglobin subunit gamma (HBG).